A 359-amino-acid chain; its full sequence is 3-dehydroquinate synthase (359 aa).

NAD(+) contacts are provided by residues 72 to 77 (EGEEHK), 106 to 110 (GVVGD), 130 to 131 (TT), Lys143, Lys152, and 170 to 173 (TLTT). The Zn(2+) site is built by Glu185, His248, and His265.

The protein belongs to the sugar phosphate cyclases superfamily. Dehydroquinate synthase family. Requires Co(2+) as cofactor. It depends on Zn(2+) as a cofactor. NAD(+) is required as a cofactor.

Its subcellular location is the cytoplasm. It carries out the reaction 7-phospho-2-dehydro-3-deoxy-D-arabino-heptonate = 3-dehydroquinate + phosphate. It functions in the pathway metabolic intermediate biosynthesis; chorismate biosynthesis; chorismate from D-erythrose 4-phosphate and phosphoenolpyruvate: step 2/7. In terms of biological role, catalyzes the conversion of 3-deoxy-D-arabino-heptulosonate 7-phosphate (DAHP) to dehydroquinate (DHQ). This is 3-dehydroquinate synthase from Pelobacter propionicus (strain DSM 2379 / NBRC 103807 / OttBd1).